The following is a 62-amino-acid chain: DNA-directed RNA polymerase subunit Rpo10 (62 aa).

Zn(2+) contacts are provided by Cys-6, Cys-9, Cys-43, and Cys-44.

It belongs to the archaeal Rpo10/eukaryotic RPB10 RNA polymerase subunit family. As to quaternary structure, part of the RNA polymerase complex. Requires Zn(2+) as cofactor.

Its subcellular location is the cytoplasm. It carries out the reaction RNA(n) + a ribonucleoside 5'-triphosphate = RNA(n+1) + diphosphate. DNA-dependent RNA polymerase (RNAP) catalyzes the transcription of DNA into RNA using the four ribonucleoside triphosphates as substrates. This Methanoculleus marisnigri (strain ATCC 35101 / DSM 1498 / JR1) protein is DNA-directed RNA polymerase subunit Rpo10.